Here is a 118-residue protein sequence, read N- to C-terminus: MRSAKLKFEKRKSRIRHKISRTSNRVRLSVFKSGRHIYAQIIDDSKSITIASASTLDKTIKKIKKSHCNVENAIKIGREIAKKANSAGIKEVVFDRGGYKYHGIIKALADAAREKITF.

This sequence belongs to the universal ribosomal protein uL18 family. Part of the 50S ribosomal subunit; part of the 5S rRNA/L5/L18/L25 subcomplex. Contacts the 5S and 23S rRNAs.

Its function is as follows. This is one of the proteins that bind and probably mediate the attachment of the 5S RNA into the large ribosomal subunit, where it forms part of the central protuberance. This chain is Large ribosomal subunit protein uL18, found in Rickettsia typhi (strain ATCC VR-144 / Wilmington).